The chain runs to 157 residues: Stalk-specific protein A (157 aa).

A signal peptide spans 1–19 (MRSILILLSLLLTIAFASA).

It localises to the secreted. In Dictyostelium discoideum (Social amoeba), this protein is Stalk-specific protein A (staA).